A 342-amino-acid polypeptide reads, in one-letter code: Hydrogenase expression/formation protein HupV (342 aa).

Belongs to the HupK family.

This is Hydrogenase expression/formation protein HupV (hupV) from Azotobacter chroococcum mcd 1.